The chain runs to 214 residues: MRVALIDYGSGNLRSAAKALERAARDGGVAAEIVVTRDVEGVLGADRVVLPGVGAFANCRRGLQGIDGMVEALAEVALVRARPFLGICVGMQLLADEGVEYGRHPGLGWIGGTVEAISPADPALKIPHMGWNSLDFQADSHALLAGIEPGTHVYFVHSYHFRPADPATRLASVEYGGPLTAMIGRENLVGTQFHPEKSQAAGLRLIANFLRWAP.

In terms of domain architecture, Glutamine amidotransferase type-1 spans 2-214; it reads RVALIDYGSG…LIANFLRWAP (213 aa). Cys88 serves as the catalytic Nucleophile. Active-site residues include His194 and Glu196.

As to quaternary structure, heterodimer of HisH and HisF.

It localises to the cytoplasm. It carries out the reaction 5-[(5-phospho-1-deoxy-D-ribulos-1-ylimino)methylamino]-1-(5-phospho-beta-D-ribosyl)imidazole-4-carboxamide + L-glutamine = D-erythro-1-(imidazol-4-yl)glycerol 3-phosphate + 5-amino-1-(5-phospho-beta-D-ribosyl)imidazole-4-carboxamide + L-glutamate + H(+). The catalysed reaction is L-glutamine + H2O = L-glutamate + NH4(+). It participates in amino-acid biosynthesis; L-histidine biosynthesis; L-histidine from 5-phospho-alpha-D-ribose 1-diphosphate: step 5/9. In terms of biological role, IGPS catalyzes the conversion of PRFAR and glutamine to IGP, AICAR and glutamate. The HisH subunit catalyzes the hydrolysis of glutamine to glutamate and ammonia as part of the synthesis of IGP and AICAR. The resulting ammonia molecule is channeled to the active site of HisF. The protein is Imidazole glycerol phosphate synthase subunit HisH of Rhodospirillum rubrum (strain ATCC 11170 / ATH 1.1.1 / DSM 467 / LMG 4362 / NCIMB 8255 / S1).